Here is a 312-residue protein sequence, read N- to C-terminus: D-apiose import binding protein (312 aa).

The N-terminal stretch at 1-26 (MKASKRWVALAAATLTLFTATGTAQA) is a signal peptide. Residues Asn-39, 115-116 (DR), 162-164 (DIN), Arg-168, Asn-218, Asp-243, and Gln-263 contribute to the D-apiofuranose site.

It belongs to the bacterial solute-binding protein 2 family.

It is found in the periplasm. Part of an ABC transporter complex involved in D-apiose import. Binds D-apiose, D-ribose and D-ribulose. The polypeptide is D-apiose import binding protein (Paraburkholderia graminis (strain ATCC 700544 / DSM 17151 / LMG 18924 / NCIMB 13744 / C4D1M)).